The primary structure comprises 180 residues: ATP synthase subunit delta (180 aa).

The protein belongs to the ATPase delta chain family. F-type ATPases have 2 components, F(1) - the catalytic core - and F(0) - the membrane proton channel. F(1) has five subunits: alpha(3), beta(3), gamma(1), delta(1), epsilon(1). F(0) has three main subunits: a(1), b(2) and c(10-14). The alpha and beta chains form an alternating ring which encloses part of the gamma chain. F(1) is attached to F(0) by a central stalk formed by the gamma and epsilon chains, while a peripheral stalk is formed by the delta and b chains.

The protein resides in the cell membrane. Functionally, f(1)F(0) ATP synthase produces ATP from ADP in the presence of a proton or sodium gradient. F-type ATPases consist of two structural domains, F(1) containing the extramembraneous catalytic core and F(0) containing the membrane proton channel, linked together by a central stalk and a peripheral stalk. During catalysis, ATP synthesis in the catalytic domain of F(1) is coupled via a rotary mechanism of the central stalk subunits to proton translocation. Its function is as follows. This protein is part of the stalk that links CF(0) to CF(1). It either transmits conformational changes from CF(0) to CF(1) or is implicated in proton conduction. This is ATP synthase subunit delta from Leuconostoc citreum (strain KM20).